The sequence spans 561 residues: Putative transport protein YbjL (561 aa).

5 helical membrane passes run 8-28 (LLNGNYILLLFVVLTLGLCLG), 32-52 (LGSIQLGNSIGVLVVSLLLGQ), 66-86 (FMLFIFCVGVEAGPNFFSIFF), 94-114 (MLALVMVGSALVIALGLGKLF), and 158-178 (NLSLGYALTYLIGLVSLIVGA). 2 consecutive RCK C-terminal domains span residues 200 to 288 (RGLD…SFRN) and 292 to 373 (VFDR…RIGF). Helical transmembrane passes span 383 to 403 (LLAFCAFFVIGLMIGMITFQF), 406 to 426 (FSFGMGNAAGLLFAGIMLGFM), 451 to 471 (VFMAGVGLSAGSGINNGLGAI), 475 to 495 (MLIAGLIVSLVPVVICFLFGA), and 540 to 560 (AIANVLLTLAGTIIVMVWPGL).

The protein belongs to the AAE transporter (TC 2.A.81) family. YbjL subfamily.

It localises to the cell membrane. This chain is Putative transport protein YbjL, found in Shigella sonnei (strain Ss046).